The chain runs to 93 residues: Guanine nucleotide-binding protein subunit gamma 1 (93 aa).

Residues 12–52 (TRGRHRIQAELKKLEQEARFLEEELEELDKTDKVSAALQEL) adopt a coiled-coil conformation. The G protein gamma domain maps to 20-93 (AELKKLEQEA…DLRRCKCWFL (74 aa)). The S-palmitoyl cysteine moiety is linked to residue Cys88. Cys90 is modified (cysteine methyl ester). Cys90 carries S-farnesyl cysteine lipidation. Positions 91–93 (WFL) are cleaved as a propeptide — removed in mature form.

As to quaternary structure, g proteins are composed of 3 units, alpha, beta and gamma. Interacts with the beta subunit RGB1.

It localises to the cell membrane. In terms of biological role, guanine nucleotide-binding proteins (G proteins) are involved as modulators or transducers in various transmembrane signaling systems. The chain is Guanine nucleotide-binding protein subunit gamma 1 from Oryza sativa subsp. indica (Rice).